A 559-amino-acid chain; its full sequence is Myb/SANT-like DNA-binding domain-containing protein 2 (559 aa).

The disordered stretch occupies residues 1 to 62 (MAAPCGSELP…GSAAGSGAAA (62 aa)). Phosphoserine is present on residues S13, S24, S27, S32, and S48. Low complexity predominate over residues 46 to 61 (GASPLGPGSAAGSGAA). The Myb-like domain maps to 103–173 (SWTPAETNAL…QCRERIKTLR (71 aa)). Glycyl lysine isopeptide (Lys-Gly) (interchain with G-Cter in SUMO2) cross-links involve residues K268 and K343. S436 is modified (phosphoserine).

This chain is Myb/SANT-like DNA-binding domain-containing protein 2 (Msantd2), found in Mus musculus (Mouse).